Here is a 374-residue protein sequence, read N- to C-terminus: Putative F-box protein At3g17480 (374 aa).

The F-box domain maps to 6 to 52 (SSPMSVLTEDLVEDILSRVPATSLVRLRSTCKQWNAILNDRRFIKKH).

The sequence is that of Putative F-box protein At3g17480 from Arabidopsis thaliana (Mouse-ear cress).